The chain runs to 420 residues: L-rhamnose isomerase (420 aa).

Residues His-262, Asp-294, and Asp-296 each contribute to the Mn(2+) site.

Belongs to the rhamnose isomerase family. In terms of assembly, homotetramer. The cofactor is Mn(2+).

Its subcellular location is the cytoplasm. It catalyses the reaction L-rhamnopyranose = L-rhamnulose. Its pathway is carbohydrate degradation; L-rhamnose degradation; glycerone phosphate from L-rhamnose: step 1/3. Catalyzes the interconversion of L-rhamnose and L-rhamnulose. In Pectobacterium carotovorum subsp. carotovorum (strain PC1), this protein is L-rhamnose isomerase.